We begin with the raw amino-acid sequence, 616 residues long: Carboxylic acid transporter protein homolog (616 aa).

A compositionally biased stretch (basic and acidic residues) spans 1–11; that stretch reads MSSSITDEKIS. The interval 1–65 is disordered; the sequence is MSSSITDEKI…LYHNPSLPAQ (65 aa). At Ser2 the chain carries N-acetylserine. Topologically, residues 2–140 are cytoplasmic; it reads SSSITDEKIS…LRKMTWQNWN (139 aa). Ser4 bears the Phosphoserine mark. Residue Lys9 forms a Glycyl lysine isopeptide (Lys-Gly) (interchain with G-Cter in ubiquitin) linkage. 3 positions are modified to phosphoserine: Ser11, Ser61, and Ser66. A Phosphothreonine modification is found at Thr70. A helical transmembrane segment spans residues 141 to 161; sequence YFFMGYFAWLSAAWAFFCVSV. Residues 162 to 176 are Extracellular-facing; it reads SVAPLAELYDRPTKD. The chain crosses the membrane as a helical span at residues 177 to 197; it reads ITWGLGLVLFVRSAGAVIFGL. Topologically, residues 198–205 are cytoplasmic; it reads WTDKSSRK. The helical transmembrane segment at 206–226 threads the bilayer; sequence WPYITCLFLFVIAQLCTPWCD. Topologically, residues 227–230 are extracellular; sequence TYEK. The helical transmembrane segment at 231–251 threads the bilayer; that stretch reads FLGVRWITGIAMGGIYGCASA. Residues 252-263 are Cytoplasmic-facing; the sequence is TAIEDAPVKARS. The chain crosses the membrane as a helical span at residues 264–284; sequence FLSGLFFSAYAMGFIFAIIFY. At 285 to 296 the chain is on the extracellular side; sequence RAFGYFRDDGWK. A helical transmembrane segment spans residues 297–317; it reads ILFWFSIFLPILLIFWRLLWP. Residues 318 to 363 are Cytoplasmic-facing; sequence ETKYFTKVLKARKLILSDAVKANGGEPLPKANFKQKMVSMKRTVQK. A Glycyl lysine isopeptide (Lys-Gly) (interchain with G-Cter in ubiquitin) cross-link involves residue Lys338. The chain crosses the membrane as a helical span at residues 364-384; sequence YWLLFAYLVVLLVGPNYLTHA. Topologically, residues 385–402 are extracellular; it reads SQDLLPTMLRAQLGLSKD. A helical transmembrane segment spans residues 403-423; the sequence is AVTVIVVVTNIGAICGGMIFG. Residues 424–432 lie on the Cytoplasmic side of the membrane; it reads QFMEVTGRR. Residues 433–453 traverse the membrane as a helical segment; the sequence is LGLLIACTMGGCFTYPAFMLR. Residues 454–457 are Extracellular-facing; the sequence is SEKA. The chain crosses the membrane as a helical span at residues 458–478; it reads ILGAGFMLYFCVFGVWGILPI. At 479–489 the chain is on the cytoplasmic side; the sequence is HLAELAPADAR. The chain crosses the membrane as a helical span at residues 490–510; sequence ALVAGLSYQLGNLASAAASTI. Topologically, residues 511 to 535 are extracellular; it reads ETQLADRYPLERDASGAVIKEDYAK. Residues 536–556 form a helical membrane-spanning segment; that stretch reads VMAILTGSVFIFTFACVFVGH. Topologically, residues 557–616 are cytoplasmic; sequence EKFHRDLSSPVMKKYINQVEEYEADGLSISDIVEQKTECASVKMIDSNVSKTYEEHIETV. Phosphoserine is present on residues Ser584, Ser603, and Ser606.

It belongs to the major facilitator superfamily. Sugar transporter (TC 2.A.1.1) family.

The protein localises to the membrane. Functionally, essential to lactate transport. The polypeptide is Carboxylic acid transporter protein homolog (JEN1) (Saccharomyces cerevisiae (strain ATCC 204508 / S288c) (Baker's yeast)).